The chain runs to 261 residues: Cytochrome c oxidase subunit 3 (261 aa).

Over 1-15 the chain is Mitochondrial matrix; that stretch reads MAHQAHAYHMVDPSP. A helical membrane pass occupies residues 16–34; the sequence is WPLTGAIAALLLTSGTAVW. Over 35-40 the chain is Mitochondrial intermembrane; that stretch reads FHFHSL. A helical transmembrane segment spans residues 41-66; the sequence is TLLTLGNVLLLLTMYQWWRDIIREGT. The Mitochondrial matrix segment spans residues 67–72; sequence FQGHHT. Residues 73 to 105 traverse the membrane as a helical segment; it reads PPVQKGLRYGMILFITSEVFFFLGFFWAFYHAS. The Mitochondrial intermembrane portion of the chain corresponds to 106-128; that stretch reads LAPTPELGGCWPPTGITTLDPFE. The chain crosses the membrane as a helical span at residues 129-152; it reads VPLLNTAVLLASGVTVTWAHHSIM. Over 153 to 155 the chain is Mitochondrial matrix; that stretch reads EGE. Residues 156-183 form a helical membrane-spanning segment; the sequence is RKQTIQALTLTILLGFYFTFLQGMEYYE. The Mitochondrial intermembrane segment spans residues 184–190; sequence APFTIAD. Residues 191–223 traverse the membrane as a helical segment; that stretch reads GVYGSTFFVATGFHGLHVIIGSTFLAVCLLRQV. Topologically, residues 224-232 are mitochondrial matrix; it reads QYHFTSEHH. The helical transmembrane segment at 233 to 256 threads the bilayer; it reads FGFEAAAWYWHFVDVVWLFLYVSI. Residues 257–261 are Mitochondrial intermembrane-facing; the sequence is YWWGS.

This sequence belongs to the cytochrome c oxidase subunit 3 family. As to quaternary structure, component of the cytochrome c oxidase (complex IV, CIV), a multisubunit enzyme composed of 14 subunits. The complex is composed of a catalytic core of 3 subunits MT-CO1, MT-CO2 and MT-CO3, encoded in the mitochondrial DNA, and 11 supernumerary subunits COX4I, COX5A, COX5B, COX6A, COX6B, COX6C, COX7A, COX7B, COX7C, COX8 and NDUFA4, which are encoded in the nuclear genome. The complex exists as a monomer or a dimer and forms supercomplexes (SCs) in the inner mitochondrial membrane with NADH-ubiquinone oxidoreductase (complex I, CI) and ubiquinol-cytochrome c oxidoreductase (cytochrome b-c1 complex, complex III, CIII), resulting in different assemblies (supercomplex SCI(1)III(2)IV(1) and megacomplex MCI(2)III(2)IV(2)).

It localises to the mitochondrion inner membrane. The catalysed reaction is 4 Fe(II)-[cytochrome c] + O2 + 8 H(+)(in) = 4 Fe(III)-[cytochrome c] + 2 H2O + 4 H(+)(out). Component of the cytochrome c oxidase, the last enzyme in the mitochondrial electron transport chain which drives oxidative phosphorylation. The respiratory chain contains 3 multisubunit complexes succinate dehydrogenase (complex II, CII), ubiquinol-cytochrome c oxidoreductase (cytochrome b-c1 complex, complex III, CIII) and cytochrome c oxidase (complex IV, CIV), that cooperate to transfer electrons derived from NADH and succinate to molecular oxygen, creating an electrochemical gradient over the inner membrane that drives transmembrane transport and the ATP synthase. Cytochrome c oxidase is the component of the respiratory chain that catalyzes the reduction of oxygen to water. Electrons originating from reduced cytochrome c in the intermembrane space (IMS) are transferred via the dinuclear copper A center (CU(A)) of subunit 2 and heme A of subunit 1 to the active site in subunit 1, a binuclear center (BNC) formed by heme A3 and copper B (CU(B)). The BNC reduces molecular oxygen to 2 water molecules using 4 electrons from cytochrome c in the IMS and 4 protons from the mitochondrial matrix. The sequence is that of Cytochrome c oxidase subunit 3 (mt-co3) from Oncorhynchus masou (Cherry salmon).